The primary structure comprises 467 residues: Tubulointerstitial nephritis antigen-like (467 aa).

Positions 1–21 (MWGCPLGLLLLLLAGQAALEA) are cleaved as a signal peptide. In terms of domain architecture, SMB spans 49 to 96 (EQDMCCRGRADECALPYLGATCYCDLFCNRTVSDCCPDFWDFCLGIPP). Cystine bridges form between Cys-53-Cys-72, Cys-70-Cys-72, Cys-70-Cys-84, Cys-76-Cys-83, and Cys-84-Cys-91. Asn-77 carries an N-linked (GlcNAc...) asparagine glycan. The N-linked (GlcNAc...) asparagine glycan is linked to Asn-160.

The protein belongs to the peptidase C1 family. In terms of processing, glycosylated.

It is found in the secreted. May be implicated in the adrenocortical zonation and in mechanisms for repressing the CYP11B1 gene expression in adrenocortical cells. This is a non catalytic peptidase C1 family protein. This is Tubulointerstitial nephritis antigen-like (Tinagl1) from Rattus norvegicus (Rat).